We begin with the raw amino-acid sequence, 274 residues long: Phosphatidylglycerol--prolipoprotein diacylglyceryl transferase (274 aa).

7 helical membrane-spanning segments follow: residues 22 to 42 (LSVR…MWLA), 61 to 81 (LLFY…VLFY), 96 to 116 (IWTG…AMVW), 125 to 145 (FFTV…VGRI), 177 to 197 (SQLY…NLFW), 204 to 224 (GAIS…VEFV), and 238 to 258 (ISMG…MIWV). R144 serves as a coordination point for a 1,2-diacyl-sn-glycero-3-phospho-(1'-sn-glycerol).

It belongs to the Lgt family.

The protein localises to the cell inner membrane. It carries out the reaction L-cysteinyl-[prolipoprotein] + a 1,2-diacyl-sn-glycero-3-phospho-(1'-sn-glycerol) = an S-1,2-diacyl-sn-glyceryl-L-cysteinyl-[prolipoprotein] + sn-glycerol 1-phosphate + H(+). Its pathway is protein modification; lipoprotein biosynthesis (diacylglyceryl transfer). Its function is as follows. Catalyzes the transfer of the diacylglyceryl group from phosphatidylglycerol to the sulfhydryl group of the N-terminal cysteine of a prolipoprotein, the first step in the formation of mature lipoproteins. The sequence is that of Phosphatidylglycerol--prolipoprotein diacylglyceryl transferase from Aeromonas hydrophila subsp. hydrophila (strain ATCC 7966 / DSM 30187 / BCRC 13018 / CCUG 14551 / JCM 1027 / KCTC 2358 / NCIMB 9240 / NCTC 8049).